The chain runs to 709 residues: G1/S-specific cyclin-E (709 aa).

Disordered stretches follow at residues 1–30 (MGLN…NGEV), 43–149 (ISSS…NLSS), 162–205 (VDGQ…GSKQ), 221–289 (TVVT…PKHQ), and 642–709 (ALRA…RSNP). 3 stretches are compositionally biased toward polar residues: residues 7–29 (SVCS…SNGE), 61–70 (PSTSFSSASQ), and 91–106 (CDSQ…TSNG). Phosphoserine occurs at positions 114, 115, 117, and 129. A compositionally biased stretch (polar residues) spans 162 to 175 (VDGQSTQELLSIRS). Ser-187, Ser-192, Ser-195, and Ser-198 each carry phosphoserine. A compositionally biased stretch (pro residues) spans 187-199 (SPLPDSPDSPPSP). Positions 228-258 (EDDDLLDDSCEDYSYDEDDEDDVEEEDDDVE) are enriched in acidic residues. Polar residues predominate over residues 260-277 (YSSTISPASSGCSQQQAV). At Thr-651 the chain carries Phosphothreonine. Residues 677 to 709 (SSTTTCCNTAASNKGGKSSSNNSVTSCSSRSNP) are compositionally biased toward low complexity.

It belongs to the cyclin family. Cyclin E subfamily. Interacts with a member of the CDK2/CDK protein kinases to form a serine/threonine kinase holoenzyme complex. The cyclin subunit imparts substrate specificity to the complex. Interacts (via C-terminus) with Z600 (via C-terminus). Isoform II is ubiquitous in early embryos and, prior to mitosis 14, is rapidly degraded in all cells except the pole (germ) cells. Expressed during G1 phase in proliferating peripheral nervous system cells. Constitutive expression in embryonic cycles lacking a G1 phase.

It is found in the nucleus. In terms of biological role, essential for the control of the cell cycle at the G1/S (start) transition. Targeted by archipelago for degradation by the SFC ubiquitin ligase complex. The polypeptide is G1/S-specific cyclin-E (CycE) (Drosophila melanogaster (Fruit fly)).